Consider the following 462-residue polypeptide: Metal cation symporter ZIP8 (462 aa).

An N-terminal signal peptide occupies residues 1-19; the sequence is MAPGRAVAGLLLLAATSLG. Topologically, residues 20-132 are extracellular; that stretch reads HPSEGPELAF…PSLSEVWGYG (113 aa). Residues Asn40, Asn88, and Asn96 are each glycosylated (N-linked (GlcNAc...) asparagine). Residues 133-153 traverse the membrane as a helical segment; it reads FLSVTIINLASLLGLILTPLI. At 154-160 the chain is on the cytoplasmic side; sequence KKSYFPK. A helical membrane pass occupies residues 161-181; it reads ILTYFVGLAIGTLFSNAIFQL. Residues 182–191 lie on the Extracellular side of the membrane; it reads IPEAFGFNPK. A helical transmembrane segment spans residues 192-212; sequence IDNYVEKAVAVFGGFYMLFFV. Residues 213 to 367 are Cytoplasmic-facing; the sequence is ERTLKMLLKT…LNAGMSTRQA (155 aa). The XEXPHE-motif motif lies at 345-350; it reads EEFPHE. Residues 368–388 traverse the membrane as a helical segment; that stretch reads LLFNFLSACSCYVGLAFGILV. Topologically, residues 389–390 are extracellular; sequence GN. Residues 391–411 traverse the membrane as a helical segment; sequence NFAPNIIFALAGGMFLYISLA. The Cytoplasmic portion of the chain corresponds to 412–431; the sequence is DMFPEMNDMLREKVTGRQTD. The helical transmembrane segment at 432-452 threads the bilayer; sequence FTFFMIQNAGMLTGFTAILLI. The Extracellular portion of the chain corresponds to 453–462; that stretch reads TLYAGDIELQ.

It belongs to the ZIP transporter (TC 2.A.5) family. In terms of assembly, homodimer. In terms of processing, N-glycosylated. N-glycosylation is not required for proper iron and zinc transport. Ubiquitously expressed.

Its subcellular location is the cell membrane. The protein resides in the apical cell membrane. It localises to the basolateral cell membrane. It is found in the lysosome membrane. It catalyses the reaction Zn(2+)(out) + 2 hydrogencarbonate(out) = Zn(2+)(in) + 2 hydrogencarbonate(in). The enzyme catalyses selenite(out) + Zn(2+)(out) + hydrogencarbonate(out) = selenite(in) + Zn(2+)(in) + hydrogencarbonate(in). It carries out the reaction Mn(2+)(out) + 2 hydrogencarbonate(out) = Mn(2+)(in) + 2 hydrogencarbonate(in). The catalysed reaction is Cd(2+)(out) + 2 hydrogencarbonate(out) = Cd(2+)(in) + 2 hydrogencarbonate(in). It catalyses the reaction Fe(2+)(out) + 2 hydrogencarbonate(out) = Fe(2+)(in) + 2 hydrogencarbonate(in). The enzyme catalyses Co(2+)(out) + 2 hydrogencarbonate(out) = Co(2+)(in) + 2 hydrogencarbonate(in). Electroneutral divalent metal cation:bicarbonate symporter of the plasma membrane mediating the cellular uptake of zinc and manganese, two divalent metal cations important for development, tissue homeostasis and immunity. Transports an electroneutral complex composed of a divalent metal cation and two bicarbonate anions or alternatively a bicarbonate and a selenite anion. Thereby, it also contributes to the cellular uptake of selenium, an essential trace metal and micronutrient. Also imports cadmium a non-essential metal which is cytotoxic and carcinogenic. May also transport iron and cobalt through membranes. Through zinc import, indirectly regulates the metal-dependent transcription factor MTF1 and the expression of some metalloproteases involved in cartilage catabolism and also probably heart development. Also indirectly regulates the expression of proteins involved in cell morphology and cytoskeleton organization. Indirectly controls innate immune function and inflammatory response by regulating zinc cellular uptake which in turn modulates the expression of genes specific of these processes. Protects, for instance, cells from injury and death at the onset of inflammation. By regulating zinc influx into monocytes also directly modulates their adhesion to endothelial cells and arteries. Reclaims manganese from the bile at the apical membrane of hepatocytes, thereby regulating the activity of the manganese-dependent enzymes through the systemic levels of the nutrient. Also participates in manganese reabsorption in the proximal tubule of the kidney. By mediating the extracellular uptake of manganese by cells of the blood-brain barrier, may also play a role in the transport of the micronutrient to the brain. With manganese cellular uptake also participates in mitochondrial proper function. Finally, also probably functions intracellularly, translocating zinc from lysosome to cytosol to indirectly enhance the expression of specific genes during TCR-mediated T cell activation. This is Metal cation symporter ZIP8 from Mus musculus (Mouse).